A 178-amino-acid polypeptide reads, in one-letter code: Cytochrome b6-f complex iron-sulfur subunit 3 (178 aa).

A helical transmembrane segment spans residues 20-42 (FITGATVAVTAGAALYPAGKFLI). The region spanning 65-161 (PASQILAEPP…VAVIDNSILI (97 aa)) is the Rieske domain. Positions 107, 109, 125, and 128 each coordinate [2Fe-2S] cluster. A disulfide bond links Cys-112 and Cys-127.

It belongs to the Rieske iron-sulfur protein family. The 4 large subunits of the cytochrome b6-f complex are cytochrome b6, subunit IV (17 kDa polypeptide, PetD), cytochrome f and the Rieske protein, while the 4 small subunits are PetG, PetL, PetM and PetN. The complex functions as a dimer. It depends on [2Fe-2S] cluster as a cofactor.

The protein localises to the cellular thylakoid membrane. It carries out the reaction 2 oxidized [plastocyanin] + a plastoquinol + 2 H(+)(in) = 2 reduced [plastocyanin] + a plastoquinone + 4 H(+)(out). Its function is as follows. Component of the cytochrome b6-f complex, which mediates electron transfer between photosystem II (PSII) and photosystem I (PSI), cyclic electron flow around PSI, and state transitions. In Nostoc sp. (strain PCC 7120 / SAG 25.82 / UTEX 2576), this protein is Cytochrome b6-f complex iron-sulfur subunit 3.